The chain runs to 113 residues: MEIEKNYRMNSLFEFYGPLLTDKQHAYLALYYGDDYSLGEIATEFNVSRQAVYDNIRRTEASLEEYEKKLHLFANYQAQNEAVDTLVSYARTHYPDDKALSTLLERVADQTAK.

This sequence belongs to the UPF0122 family.

Functionally, might take part in the signal recognition particle (SRP) pathway. This is inferred from the conservation of its genetic proximity to ftsY/ffh. May be a regulatory protein. This is UPF0122 protein LSEI_1603 from Lacticaseibacillus paracasei (strain ATCC 334 / BCRC 17002 / CCUG 31169 / CIP 107868 / KCTC 3260 / NRRL B-441) (Lactobacillus paracasei).